Reading from the N-terminus, the 166-residue chain is ATP synthase subunit b (166 aa).

Residues F8 to V28 traverse the membrane as a helical segment.

The protein belongs to the ATPase B chain family. In terms of assembly, F-type ATPases have 2 components, F(1) - the catalytic core - and F(0) - the membrane proton channel. F(1) has five subunits: alpha(3), beta(3), gamma(1), delta(1), epsilon(1). F(0) has three main subunits: a(1), b(2) and c(10-14). The alpha and beta chains form an alternating ring which encloses part of the gamma chain. F(1) is attached to F(0) by a central stalk formed by the gamma and epsilon chains, while a peripheral stalk is formed by the delta and b chains.

Its subcellular location is the cell inner membrane. Functionally, f(1)F(0) ATP synthase produces ATP from ADP in the presence of a proton or sodium gradient. F-type ATPases consist of two structural domains, F(1) containing the extramembraneous catalytic core and F(0) containing the membrane proton channel, linked together by a central stalk and a peripheral stalk. During catalysis, ATP synthesis in the catalytic domain of F(1) is coupled via a rotary mechanism of the central stalk subunits to proton translocation. Its function is as follows. Component of the F(0) channel, it forms part of the peripheral stalk, linking F(1) to F(0). The polypeptide is ATP synthase subunit b (Flavobacterium johnsoniae (strain ATCC 17061 / DSM 2064 / JCM 8514 / BCRC 14874 / CCUG 350202 / NBRC 14942 / NCIMB 11054 / UW101) (Cytophaga johnsonae)).